Consider the following 260-residue polypeptide: Hydroxyethylthiazole kinase (260 aa).

M38 contacts substrate. ATP is bound by residues R114 and T159. G186 lines the substrate pocket.

This sequence belongs to the Thz kinase family. Requires Mg(2+) as cofactor.

The catalysed reaction is 5-(2-hydroxyethyl)-4-methylthiazole + ATP = 4-methyl-5-(2-phosphooxyethyl)-thiazole + ADP + H(+). It participates in cofactor biosynthesis; thiamine diphosphate biosynthesis; 4-methyl-5-(2-phosphoethyl)-thiazole from 5-(2-hydroxyethyl)-4-methylthiazole: step 1/1. In terms of biological role, catalyzes the phosphorylation of the hydroxyl group of 4-methyl-5-beta-hydroxyethylthiazole (THZ). This is Hydroxyethylthiazole kinase from Helicobacter pylori (strain HPAG1).